The primary structure comprises 162 residues: UPF0763 protein Sdel_0383 (162 aa).

It belongs to the UPF0763 family.

This Sulfurospirillum deleyianum (strain ATCC 51133 / DSM 6946 / 5175) protein is UPF0763 protein Sdel_0383.